The primary structure comprises 574 residues: Serine/arginine repetitive matrix protein 4 (574 aa).

Disordered regions lie at residues 45–217 (LETP…HGGD), 257–291 (IVQNSESSDGKRRADYDSGNDTSSPPSSKTGITRS), 366–422 (DLIS…SYSL), 454–508 (YCSS…VSSR), and 526–574 (RSRS…RARR). Residues 51-72 (PKDDEEKVKAKDLVTKTHEKNG) are compositionally biased toward basic and acidic residues. Composition is skewed to basic residues over residues 73-88 (HIKRRGRKRHSHRRAR), 102-120 (PKTKKKKKKSQRKRRRHRS), and 128-184 (VRKK…HRKA). The segment covering 194-217 (NRSEDCEKSGFRDGGRSSDVHGGD) has biased composition (basic and acidic residues). Residues 275–289 (GNDTSSPPSSKTGIT) show a composition bias toward polar residues. Basic and acidic residues predominate over residues 366 to 385 (DLISDRNRSPSHDRYEDGTR). The span at 405–422 (RSLSSGRRSYSRSSSYSL) shows a compositional bias: low complexity. Residues 454-477 (YCSSCKSRKHSRRRPSSPMRKRRR) show a composition bias toward basic residues. Positions 478 to 487 (DSPSHLEARR) are enriched in basic and acidic residues. Low complexity predominate over residues 496 to 508 (IPYYRPSPSVSSR). Positions 526–539 (RSRSCSRSRSRSHS) are enriched in basic residues. The segment covering 540–559 (HTYSSYRSYSRSSSWNSLYS) has biased composition (low complexity). Residues 560–574 (RRSRSRSRSYSRARR) are compositionally biased toward basic residues.

The protein belongs to the nSR100 family.

The protein resides in the nucleus. Functionally, splicing factor specifically required for neural cell differentiation. Acts in conjunction with nPTB/PTBP2 by binding directly to its regulated target transcripts and promotes neural-specific exon inclusion in many genes that function in neural cell differentiation. Required to promote the inclusion of neural-specific exon 10 in nPTB/PTBP2, leading to increased expression of neural-specific nPTB/PTBP2. The protein is Serine/arginine repetitive matrix protein 4 (srrm4) of Danio rerio (Zebrafish).